The following is a 511-amino-acid chain: Cobyric acid synthase (511 aa).

The 193-residue stretch at 251–443 folds into the GATase cobBQ-type domain; that stretch reads LLDIAIICLP…IHGIFDNDVF (193 aa). Cysteine 332 (nucleophile) is an active-site residue. Histidine 435 is a catalytic residue.

Belongs to the CobB/CobQ family. CobQ subfamily.

Its pathway is cofactor biosynthesis; adenosylcobalamin biosynthesis. Its function is as follows. Catalyzes amidations at positions B, D, E, and G on adenosylcobyrinic A,C-diamide. NH(2) groups are provided by glutamine, and one molecule of ATP is hydrogenolyzed for each amidation. This Listeria monocytogenes serotype 4b (strain F2365) protein is Cobyric acid synthase.